The following is a 443-amino-acid chain: MFLAQEIIRKKRNGLALSSEEIQFFVQGITTNSVSEGQIAALGMAVYFNDMNMDERIALTTAMRDSGTVLNWQSLGLNGPVIDKHSTGGVGDVISLMLGPMAAACGGYVPMISGRGLGHTGGTLDKFDAIQGYQTEPSSELFRKVVKEVGVAIIGQTGDLVPADKRFYSIRDNTATVESISLITASILSKKLACNLDALAMDVKVGSGAFMPTYEASEELARSIAAVANGAGTKTTALLTDMNQVLASCAGNAVEVKEAIDFLTGAYRNPRLYEVTMGLCAEMLLLGGLASNEADARAKLNRVLDNGRAAELFGKMVSGLGGPVDFVENYSKYLPQSQIIRPVFADMQGYAYSMDTRELGLAVVTLGGGRRKPGDTLDYSVGLTQVCALGDKVDSSTPIAVIHAQSEAAFAEAELAVKKAIHIGETAPEKTPEIYAYIRASDL.

It belongs to the thymidine/pyrimidine-nucleoside phosphorylase family. Homodimer.

The enzyme catalyses thymidine + phosphate = 2-deoxy-alpha-D-ribose 1-phosphate + thymine. It participates in pyrimidine metabolism; dTMP biosynthesis via salvage pathway; dTMP from thymine: step 1/2. Functionally, the enzymes which catalyze the reversible phosphorolysis of pyrimidine nucleosides are involved in the degradation of these compounds and in their utilization as carbon and energy sources, or in the rescue of pyrimidine bases for nucleotide synthesis. The protein is Thymidine phosphorylase of Shewanella baltica (strain OS195).